The sequence spans 61 residues: Weak toxin CM-2 (61 aa).

4 disulfide bridges follow: cysteine 3/cysteine 21, cysteine 14/cysteine 37, cysteine 41/cysteine 53, and cysteine 54/cysteine 59.

Belongs to the three-finger toxin family. Short-chain subfamily. Orphan group VI sub-subfamily. Expressed by the venom gland.

It localises to the secreted. The protein is Weak toxin CM-2 of Naja haje haje (Egyptian cobra).